A 441-amino-acid chain; its full sequence is Histidinol dehydrogenase homolog (441 aa).

Zn(2+) is bound at residue His266. Residues Glu334 and His335 each act as proton acceptor in the active site. A Zn(2+)-binding site is contributed by His427.

This sequence belongs to the histidinol dehydrogenase family. It depends on Zn(2+) as a cofactor.

This is Histidinol dehydrogenase homolog from Cereibacter sphaeroides (strain ATCC 17023 / DSM 158 / JCM 6121 / CCUG 31486 / LMG 2827 / NBRC 12203 / NCIMB 8253 / ATH 2.4.1.) (Rhodobacter sphaeroides).